The following is a 211-amino-acid chain: 7-carboxy-7-deazaguanine synthase (211 aa).

Residues 22 to 24 and arginine 37 each bind substrate; that span reads LQG. The Radical SAM core domain occupies 28–211; it reads NTGMPSVFVR…LQTHKLIGIE (184 aa). 3 residues coordinate [4Fe-4S] cluster: cysteine 41, cysteine 45, and cysteine 48. Residue threonine 50 coordinates Mg(2+). Threonine 78 contacts substrate. S-adenosyl-L-methionine contacts are provided by residues glycine 80 and 122–124; that span reads SPK.

The protein belongs to the radical SAM superfamily. 7-carboxy-7-deazaguanine synthase family. Homodimer. It depends on [4Fe-4S] cluster as a cofactor. S-adenosyl-L-methionine serves as cofactor. The cofactor is Mg(2+).

It carries out the reaction 6-carboxy-5,6,7,8-tetrahydropterin + H(+) = 7-carboxy-7-deazaguanine + NH4(+). It participates in purine metabolism; 7-cyano-7-deazaguanine biosynthesis. In terms of biological role, catalyzes the complex heterocyclic radical-mediated conversion of 6-carboxy-5,6,7,8-tetrahydropterin (CPH4) to 7-carboxy-7-deazaguanine (CDG), a step common to the biosynthetic pathways of all 7-deazapurine-containing compounds. The polypeptide is 7-carboxy-7-deazaguanine synthase (Haemophilus influenzae (strain ATCC 51907 / DSM 11121 / KW20 / Rd)).